The sequence spans 432 residues: 3-phosphoshikimate 1-carboxyvinyltransferase (432 aa).

3-phosphoshikimate-binding residues include Lys23, Ser24, and Arg28. Lys23 contributes to the phosphoenolpyruvate binding site. Phosphoenolpyruvate contacts are provided by Gly95 and Arg123. The 3-phosphoshikimate site is built by Ser166, Gln168, Asp315, and Lys342. Gln168 lines the phosphoenolpyruvate pocket. Asp315 acts as the Proton acceptor in catalysis. 2 residues coordinate phosphoenolpyruvate: Arg346 and Arg390.

It belongs to the EPSP synthase family. As to quaternary structure, monomer.

It is found in the cytoplasm. The enzyme catalyses 3-phosphoshikimate + phosphoenolpyruvate = 5-O-(1-carboxyvinyl)-3-phosphoshikimate + phosphate. It functions in the pathway metabolic intermediate biosynthesis; chorismate biosynthesis; chorismate from D-erythrose 4-phosphate and phosphoenolpyruvate: step 6/7. In terms of biological role, catalyzes the transfer of the enolpyruvyl moiety of phosphoenolpyruvate (PEP) to the 5-hydroxyl of shikimate-3-phosphate (S3P) to produce enolpyruvyl shikimate-3-phosphate and inorganic phosphate. The protein is 3-phosphoshikimate 1-carboxyvinyltransferase of Lactiplantibacillus plantarum (strain ATCC BAA-793 / NCIMB 8826 / WCFS1) (Lactobacillus plantarum).